A 452-amino-acid polypeptide reads, in one-letter code: Enolase (452 aa).

Residue Q167 participates in (2R)-2-phosphoglycerate binding. E209 acts as the Proton donor in catalysis. The Mg(2+) site is built by D250, E310, and D337. 4 residues coordinate (2R)-2-phosphoglycerate: K362, R391, S392, and K413. The Proton acceptor role is filled by K362.

The protein belongs to the enolase family. Mg(2+) serves as cofactor.

It is found in the cytoplasm. Its subcellular location is the secreted. It localises to the cell surface. The catalysed reaction is (2R)-2-phosphoglycerate = phosphoenolpyruvate + H2O. Its pathway is carbohydrate degradation; glycolysis; pyruvate from D-glyceraldehyde 3-phosphate: step 4/5. Functionally, catalyzes the reversible conversion of 2-phosphoglycerate (2-PG) into phosphoenolpyruvate (PEP). It is essential for the degradation of carbohydrates via glycolysis. This Mycoplasmopsis synoviae (strain 53) (Mycoplasma synoviae) protein is Enolase.